A 1025-amino-acid chain; its full sequence is Protein mono-ADP-ribosyltransferase PARP10 (1025 aa).

Phosphothreonine is present on T101. An ADP-ribosyl glutamic acid modification is found at E106. N6-(ADP-ribosyl)lysine is present on K140. The disordered stretch occupies residues 318 to 346 (GIMTTGSGQEPGQSGTSLRTGPMGSLGQA). Positions 321–336 (TTGSGQEPGQSGTSLR) are enriched in polar residues. 3 positions are modified to phosphoserine: S378, S423, and S431. Disordered stretches follow at residues 569 to 589 (VLPGNAHTLWTPDSTGGDQED) and 617 to 644 (LEEEGPQEQPEEEVTPGHEEEEPVAPST). Acidic residues predominate over residues 617 to 639 (LEEEGPQEQPEEEVTPGHEEEEP). 2 consecutive short sequence motifs (ubiquitin-interacting) follow at residues 650–667 (LEEEAALQLALHRSLEPQ) and 673–690 (QEEAAALRQALTLSLLEQ). S663 is modified (phosphoserine). The segment at 700–907 (DGGTDGKAQL…CAHGFNRSFC (208 aa)) is myc binding. The PARP catalytic domain occupies 806-1025 (PTLAGQTLKG…SGLPGRSPDT (220 aa)). A PIP-box motif is present at residues 831–838 (QEVVRAFY). An ADP-ribosyl glutamic acid modification is found at E882. K916 carries the post-translational modification N6-(ADP-ribosyl)lysine. K916 carries the post-translational modification N6-acetyllysine. The tract at residues 1006–1025 (HVPRASPDDPSGLPGRSPDT) is disordered. The residue at position 1011 (S1011) is a Phosphoserine.

It belongs to the ARTD/PARP family. In terms of assembly, interacts with MYC. Interacts with PARP14. Interacts (via-PIP box and ubiquitin-interacting motifs) with PCNA. In terms of processing, stimulated through its phosphorylation by CDK2. Acquires CDK-dependent phosphorylation through late-G1 to S phase, and from prometaphase to cytokinesis in the nucleolar organizing regions. Phosphorylation is suppressed in growth-arrested cells. Post-translationally, auto-mono-ADP-ribosylated on glutamate and lysine residues. In terms of tissue distribution, highly expressed in spleen and thymus. Intermediate levels in liver, kidney, pancreas, prostate, testis, ovary, intestine, and leukocytes. Low expression in heart, brain, placenta, lung, skeletal muscle, and colon.

It localises to the nucleus. It is found in the nucleolus. Its subcellular location is the cytoplasm. The catalysed reaction is L-lysyl-[protein] + NAD(+) = N(6)-(ADP-D-ribosyl)-L-lysyl-[protein] + nicotinamide + H(+). The enzyme catalyses L-aspartyl-[protein] + NAD(+) = 4-O-(ADP-D-ribosyl)-L-aspartyl-[protein] + nicotinamide. It carries out the reaction L-glutamyl-[protein] + NAD(+) = 5-O-(ADP-D-ribosyl)-L-glutamyl-[protein] + nicotinamide. Its function is as follows. ADP-ribosyltransferase that mediates mono-ADP-ribosylation of glutamate and aspartate residues on target proteins. In contrast to PARP1 and PARP2, it is not able to mediate poly-ADP-ribosylation. Catalyzes mono-ADP-ribosylation of GSK3B, leading to negatively regulate GSK3B kinase activity. Involved in translesion DNA synthesis in response to DNA damage via its interaction with PCNA. This is Protein mono-ADP-ribosyltransferase PARP10 from Homo sapiens (Human).